The sequence spans 498 residues: Cytochrome P450 monooxygenase 110 (498 aa).

Residues 7 to 24 traverse the membrane as a helical segment; it reads YVFALLGILATLYFVRWS. Asn425 is a glycosylation site (N-linked (GlcNAc...) asparagine). A heme-binding site is contributed by Cys440.

It belongs to the cytochrome P450 family. Requires heme as cofactor.

It is found in the membrane. Its pathway is secondary metabolite biosynthesis. Its function is as follows. Cytochrome P450 monooxygenase that is able to use dehydroabietic acid and testosterone as substrates for oxidation, suggesting that the natural substrate(s) may be structurally related to steroid compounds. In Postia placenta (strain ATCC 44394 / Madison 698-R) (Brown rot fungus), this protein is Cytochrome P450 monooxygenase 110.